We begin with the raw amino-acid sequence, 102 residues long: Small ribosomal subunit protein uS10 (102 aa).

It belongs to the universal ribosomal protein uS10 family. Part of the 30S ribosomal subunit.

In terms of biological role, involved in the binding of tRNA to the ribosomes. This Pyrococcus horikoshii (strain ATCC 700860 / DSM 12428 / JCM 9974 / NBRC 100139 / OT-3) protein is Small ribosomal subunit protein uS10.